We begin with the raw amino-acid sequence, 66 residues long: uncharacterized protein (66 aa).

This is an uncharacterized protein from Vaccinia virus (strain Copenhagen) (VACV).